The following is a 224-amino-acid chain: Small ribosomal subunit protein uS2 (224 aa).

The segment covering 1 to 14 (MAEAKPAPEKEAAV) has biased composition (basic and acidic residues). The segment at 1–32 (MAEAKPAPEKEAAVKTESVPVADDEAASAKEG) is disordered.

The protein belongs to the universal ribosomal protein uS2 family.

The protein is Small ribosomal subunit protein uS2 of Methanosarcina mazei (strain ATCC BAA-159 / DSM 3647 / Goe1 / Go1 / JCM 11833 / OCM 88) (Methanosarcina frisia).